A 250-amino-acid chain; its full sequence is Peptidyl-tRNA hydrolase, mitochondrial (250 aa).

Residues 1–45 (MRLLSGASASRIPCPLLSLARARARCLPVPASATACRAASSSAAA) constitute a mitochondrion transit peptide. Tyrosine 68 is a binding site for tRNA. The active-site Proton acceptor is histidine 73. Residues phenylalanine 118, asparagine 120, and asparagine 166 each contribute to the tRNA site.

The protein belongs to the PTH family.

It localises to the mitochondrion. The enzyme catalyses an N-acyl-L-alpha-aminoacyl-tRNA + H2O = an N-acyl-L-amino acid + a tRNA + H(+). Functionally, the natural substrate for this enzyme may be peptidyl-tRNAs which drop off the ribosome during protein synthesis. This Oryza sativa subsp. japonica (Rice) protein is Peptidyl-tRNA hydrolase, mitochondrial.